A 230-amino-acid chain; its full sequence is MAKDVKPTRKNLMQIEDRIELSERGHDTLEKKRDGLIMEFMDILDQAQDVREDLDGSYERAQRAINMARAMEGDVAVRGAAAALKEHPELTTQSKNIMGVVVPQIESSKVRKSLDERGYGVMGTSARIDEAAEAYEELLENIILAAEVETAMKKMLEEIETTKRRVNALEFKLLPDLYDNQEYIEQKLEEQEREEIFRMKKIKAKKEEEEDALAAEEEAEEEPEAVTADD.

The tract at residues 204–230 is disordered; the sequence is AKKEEEEDALAAEEEAEEEPEAVTADD. Over residues 208 to 230 the composition is skewed to acidic residues; that stretch reads EEEDALAAEEEAEEEPEAVTADD.

The protein belongs to the V-ATPase D subunit family. Has multiple subunits with at least A(3), B(3), C, D, E, F, H, I and proteolipid K(x).

The protein resides in the cell membrane. Component of the A-type ATP synthase that produces ATP from ADP in the presence of a proton gradient across the membrane. In Haloarcula marismortui (strain ATCC 43049 / DSM 3752 / JCM 8966 / VKM B-1809) (Halobacterium marismortui), this protein is A-type ATP synthase subunit D.